Here is a 334-residue protein sequence, read N- to C-terminus: Putative fatty acid elongase 1 (334 aa).

Over 1-51 (MDLTGAHMLKIHRPSIDHPFGVDLWHLFEQLSIKTIGWNPSEFEYIPGKTP) the chain is Lumenal. The helical transmembrane segment at 52–72 (MSQWSSVIVSITAYYVIILSG) threads the bilayer. Residues 73–86 (RAIMTNRKPLKQRR) lie on the Cytoplasmic side of the membrane. The helical transmembrane segment at 87–107 (LFQLHNFILTIISGALLALLV) threads the bilayer. Residues 108-135 (EEVFRNYMRNGLFYCVCDSRHFTQRLVT) lie on the Lumenal side of the membrane. A helical transmembrane segment spans residues 136 to 156 (LYYLNYLTKYLELMDTVFLFL). Residues 157–160 (KKKP) are Cytoplasmic-facing. The helical transmembrane segment at 161–181 (LAFLHCYHHGITALLCFTQLL) threads the bilayer. The Lumenal portion of the chain corresponds to 182-187 (GRTSVQ). A helical transmembrane segment spans residues 188-208 (WGVIGLNLYVHVIMYSYYFLA). At 209 to 224 (ACGRRVWWKQWVTRVQ) the chain is on the cytoplasmic side. A helical transmembrane segment spans residues 225 to 245 (IIQFVLDLILCYFGTYSHIAF). Residues 246 to 260 (RYFPWLPHVGDCSGS) are Lumenal-facing. The helical transmembrane segment at 261 to 281 (LFAAFFGCGVLSSYLFLFIGF) threads the bilayer. The Cytoplasmic portion of the chain corresponds to 282–334 (YINTYIKRGAKKNQRKAAGKADNTSVAAAAGSEALAATTATNASPFSARSRKL). Serine 325 is subject to Phosphoserine.

This sequence belongs to the ELO family.

It localises to the endoplasmic reticulum membrane. The catalysed reaction is a very-long-chain acyl-CoA + malonyl-CoA + H(+) = a very-long-chain 3-oxoacyl-CoA + CO2 + CoA. In terms of biological role, may be involved in the synthesis of very long chain fatty acids. The chain is Putative fatty acid elongase 1 from Schizosaccharomyces pombe (strain 972 / ATCC 24843) (Fission yeast).